Reading from the N-terminus, the 387-residue chain is Phosphoglycerate kinase (387 aa).

Residues 21-23 (DLN), Arg36, 59-62 (HLGR), Arg113, and Arg146 contribute to the substrate site. ATP-binding positions include Lys197, Glu314, and 340-343 (GGDT).

Belongs to the phosphoglycerate kinase family. In terms of assembly, monomer.

It is found in the cytoplasm. The enzyme catalyses (2R)-3-phosphoglycerate + ATP = (2R)-3-phospho-glyceroyl phosphate + ADP. It participates in carbohydrate degradation; glycolysis; pyruvate from D-glyceraldehyde 3-phosphate: step 2/5. The sequence is that of Phosphoglycerate kinase from Sodalis glossinidius (strain morsitans).